Consider the following 883-residue polypeptide: Phosphoenolpyruvate carboxylase (883 aa).

Residues histidine 138 and lysine 546 contribute to the active site.

It belongs to the PEPCase type 1 family. The cofactor is Mg(2+).

It carries out the reaction oxaloacetate + phosphate = phosphoenolpyruvate + hydrogencarbonate. Functionally, forms oxaloacetate, a four-carbon dicarboxylic acid source for the tricarboxylic acid cycle. This Salmonella dublin (strain CT_02021853) protein is Phosphoenolpyruvate carboxylase.